Reading from the N-terminus, the 80-residue chain is U6-ctenitoxin-Pn1a (80 aa).

An N-terminal signal peptide occupies residues 1–21 (MWLKIQVFVLALALITLGIQA). A propeptide spanning residues 22 to 37 (EPNSGPNNPLIQEEAR) is cleaved from the precursor. 4 disulfide bridges follow: C39–C54, C46–C59, C53–C69, and C61–C67. The propeptide occupies 72 to 80 (TLGDLFGRR).

This sequence belongs to the neurotoxin 02 (plectoxin) family. 01 (Tx3) subfamily. Expressed by the venom gland.

The protein localises to the secreted. In terms of biological role, antagonist of L-type calcium channels (Cav1/CACNA1). In Phoneutria nigriventer (Brazilian armed spider), this protein is U6-ctenitoxin-Pn1a.